The following is a 291-amino-acid chain: 33 kDa chaperonin (291 aa).

Cystine bridges form between Cys235–Cys237 and Cys268–Cys271.

This sequence belongs to the HSP33 family. Post-translationally, under oxidizing conditions two disulfide bonds are formed involving the reactive cysteines. Under reducing conditions zinc is bound to the reactive cysteines and the protein is inactive.

The protein localises to the cytoplasm. Its function is as follows. Redox regulated molecular chaperone. Protects both thermally unfolding and oxidatively damaged proteins from irreversible aggregation. Plays an important role in the bacterial defense system toward oxidative stress. The sequence is that of 33 kDa chaperonin from Bacillus velezensis (strain DSM 23117 / BGSC 10A6 / LMG 26770 / FZB42) (Bacillus amyloliquefaciens subsp. plantarum).